The sequence spans 271 residues: Small ribosomal subunit protein uS2 (271 aa).

The protein belongs to the universal ribosomal protein uS2 family.

This Wolbachia pipientis subsp. Culex pipiens (strain wPip) protein is Small ribosomal subunit protein uS2.